A 665-amino-acid chain; its full sequence is RNA-directed RNA polymerase (665 aa).

The catalysed reaction is RNA(n) + a ribonucleoside 5'-triphosphate = RNA(n+1) + diphosphate. Functionally, RNA-dependent RNA polymerase which replicates the viral genome. The polypeptide is RNA-directed RNA polymerase (Atkinsonella hypoxylon (AhV)).